Consider the following 214-residue polypeptide: DNA-directed RNA polymerase subunit alpha (214 aa).

Belongs to the RNA polymerase alpha chain family. In plastids the minimal PEP RNA polymerase catalytic core is composed of four subunits: alpha, beta, beta', and beta''. When a (nuclear-encoded) sigma factor is associated with the core the holoenzyme is formed, which can initiate transcription.

The protein resides in the plastid. Its subcellular location is the chloroplast. The catalysed reaction is RNA(n) + a ribonucleoside 5'-triphosphate = RNA(n+1) + diphosphate. Its function is as follows. DNA-dependent RNA polymerase catalyzes the transcription of DNA into RNA using the four ribonucleoside triphosphates as substrates. The chain is DNA-directed RNA polymerase subunit alpha (rpoA) from Euglena viridis (Cercaria viridis).